Reading from the N-terminus, the 194-residue chain is MHLNKMKKVSLKTYLVLFFLIFFIFCSFWFIKPKEKKLKLEKLRYEEVIKKINAKNNQNLKSVENFITENKNIYGTLSSLFLAKKYILDKNLDKALIQLNNSLKYTKEENLQNILKIRIAKIKIQQNKNQDAIKILEEIKDNSWKNIVENMKGDIFMKNKEIKKAILAWKKSKYLEKSNASKEIINMKINEIKR.

Residues 1–10 (MHLNKMKKVS) are Cytoplasmic-facing. Residues 11-31 (LKTYLVLFFLIFFIFCSFWFI) traverse the membrane as a helical segment. Topologically, residues 32 to 194 (KPKEKKLKLE…INMKINEIKR (163 aa)) are periplasmic.

It belongs to the YfgM family. Interacts with the SecYEG translocon. Forms a complex with PpiD.

The protein localises to the cell inner membrane. Functionally, may mediate protein transfer from the SecYEG translocon to the periplasmic chaperone network via its periplasmic C-terminal region. This chain is Ancillary SecYEG translocon subunit, found in Buchnera aphidicola subsp. Schizaphis graminum (strain Sg).